A 57-amino-acid polypeptide reads, in one-letter code: RPSFCNLPVKPGPCSGFFSAFYYSQKTNKCHSFTYSGCRGNGNRFRTIEECRRTCVG.

Residues 5–55 (CNLPVKPGPCSGFFSAFYYSQKTNKCHSFTYSGCRGNGNRFRTIEECRRTC) enclose the BPTI/Kunitz inhibitor domain. 3 disulfide bridges follow: Cys5-Cys55, Cys14-Cys38, and Cys30-Cys51.

This sequence belongs to the venom Kunitz-type family. Expressed by the venom gland.

The protein localises to the secreted. Interacts with vasopressin V2 receptor (V2R/AVPR2), probably in a selective manner. Inhibits vasopressin binding human V2R in the nanomolar range (Ki=3.50 nM), and also potently inhibits vasopressin-induced cAMP production (IC(50)=21 nM). In vivo, intraperitoneal injection of this protein into rats increases diuresis by 6-fold, without any loss of electrolytes. This chain is Mambaquaretin-5, found in Dendroaspis jamesoni kaimosae (Eastern Jameson's mamba).